Consider the following 419-residue polypeptide: Acyl-[acyl-carrier-protein] hydrolase FATB1, chloroplastic (419 aa).

The transit peptide at 1–50 directs the protein to the chloroplast; the sequence is MVAAAATSAFFPVPAPGTSPKPGKSGNWPSSLSPTFKPKSIPNGGFQVKA. The segment at 1-84 is disordered; that stretch reads MVAAAATSAF…DTSSSPPPRA (84 aa). Polar residues predominate over residues 61–78; that stretch reads SAVNLKSGSLNTQEDTSS. Catalysis depends on residues Asn315, His317, and Cys352. The disordered stretch occupies residues 390–419; it reads SRTEWRPKNAGTNGAISTSTAKTSNGNSVS. Residues 399–419 are compositionally biased toward polar residues; the sequence is AGTNGAISTSTAKTSNGNSVS.

It belongs to the acyl-ACP thioesterase family.

Its subcellular location is the plastid. It localises to the chloroplast. It carries out the reaction octanoyl-[ACP] + H2O = octanoate + holo-[ACP] + H(+). It catalyses the reaction decanoyl-[ACP] + H2O = decanoate + holo-[ACP] + H(+). Functionally, plays an essential role in chain termination during de novo fatty acid synthesis. Possesses thioesterase activity for short chain acyl-ACPs. Substrate preference is 8:0 &gt; 10:0. The sequence is that of Acyl-[acyl-carrier-protein] hydrolase FATB1, chloroplastic from Cuphea viscosissima (Blue waxweed).